A 691-amino-acid polypeptide reads, in one-letter code: Lacticin-481/lactococcin-DR transport/processing ATP-binding protein lcnDR3 (691 aa).

One can recognise a Peptidase C39 domain in the interval 6–130; that stretch reads QNNEQDCLLA…KKFSGYIITL (125 aa). C12 is an active-site residue. An ABC transmembrane type-1 domain is found at 158-434; the sequence is TFLYIFSLFI…IQDVMFEISR (277 aa). 5 helical membrane passes run 159 to 179, 189 to 209, 262 to 284, 289 to 311, and 385 to 405; these read FLYIFSLFISQIVALWFSIIL, ITYSFIMMISLVLFQTLSLLM, GILLKIFPSLLNFFTVFIVIIYL, FTLTLFLVIMNLLYMIFSFSLIS, and ICVILMMIFGIYLNQGNLVSI. Residues 464-689 form the ABC transporter domain; it reads IILKDISYSY…LLNDSYNSFV (226 aa). 497 to 504 provides a ligand contact to ATP; the sequence is GKSGSGKS.

The protein belongs to the ABC transporter superfamily.

The protein resides in the cell membrane. Functionally, probably implicated in the export process of the lantibiotic lacticin-481/lactococcin-DR. This Lactococcus lactis subsp. lactis (Streptococcus lactis) protein is Lacticin-481/lactococcin-DR transport/processing ATP-binding protein lcnDR3 (lcnDR3).